Reading from the N-terminus, the 184-residue chain is MKIAQEIRAGNVIMHGKDPMVVLKTEYSRGGRNSATVRMKLKSLIANFNTEVVFKADDKMDQVILDKKECTYSYFADPMYICMDSEYNQYEVEAENMGDSLNYLQDGMELEVVFYDGKAISVEVPTSVQREITWTEPAVKGDTSGKVLKPAKIATGFEIGVPIFVAQGDVVEIDTRTGEYRKRV.

It belongs to the elongation factor P family.

Its subcellular location is the cytoplasm. It participates in protein biosynthesis; polypeptide chain elongation. Functionally, involved in peptide bond synthesis. Stimulates efficient translation and peptide-bond synthesis on native or reconstituted 70S ribosomes in vitro. Probably functions indirectly by altering the affinity of the ribosome for aminoacyl-tRNA, thus increasing their reactivity as acceptors for peptidyl transferase. This is Elongation factor P from Polaromonas sp. (strain JS666 / ATCC BAA-500).